The sequence spans 282 residues: ATP phosphoribosyltransferase (282 aa).

This sequence belongs to the ATP phosphoribosyltransferase family. Long subfamily. It depends on Mg(2+) as a cofactor.

It is found in the cytoplasm. The catalysed reaction is 1-(5-phospho-beta-D-ribosyl)-ATP + diphosphate = 5-phospho-alpha-D-ribose 1-diphosphate + ATP. It functions in the pathway amino-acid biosynthesis; L-histidine biosynthesis; L-histidine from 5-phospho-alpha-D-ribose 1-diphosphate: step 1/9. Feedback inhibited by histidine. Functionally, catalyzes the condensation of ATP and 5-phosphoribose 1-diphosphate to form N'-(5'-phosphoribosyl)-ATP (PR-ATP). Has a crucial role in the pathway because the rate of histidine biosynthesis seems to be controlled primarily by regulation of HisG enzymatic activity. This Haloarcula marismortui (strain ATCC 43049 / DSM 3752 / JCM 8966 / VKM B-1809) (Halobacterium marismortui) protein is ATP phosphoribosyltransferase.